The following is a 396-amino-acid chain: Putative cystathionine beta-lyase (396 aa).

Position 210 is an N6-(pyridoxal phosphate)lysine (lysine 210).

This sequence belongs to the trans-sulfuration enzymes family. Requires pyridoxal 5'-phosphate as cofactor.

The enzyme catalyses L,L-cystathionine + H2O = L-homocysteine + pyruvate + NH4(+). It catalyses the reaction an S-substituted L-cysteine + H2O = a thiol + pyruvate + NH4(+). Its pathway is amino-acid biosynthesis; L-methionine biosynthesis via de novo pathway; L-homocysteine from L-cystathionine: step 1/1. Catalyzes the cleavage of cystathionine to homocysteine, pyruvate and ammonia during methionine biosynthesis. The chain is Putative cystathionine beta-lyase (metC) from Rhizobium johnstonii (strain DSM 114642 / LMG 32736 / 3841) (Rhizobium leguminosarum bv. viciae).